Here is a 285-residue protein sequence, read N- to C-terminus: Phosphatidylserine decarboxylase proenzyme (285 aa).

Catalysis depends on charge relay system; for autoendoproteolytic cleavage activity residues D89, H146, and S252. The Schiff-base intermediate with substrate; via pyruvic acid; for decarboxylase activity role is filled by S252. Position 252 is a pyruvic acid (Ser); by autocatalysis (S252).

The protein belongs to the phosphatidylserine decarboxylase family. PSD-B subfamily. Prokaryotic type I sub-subfamily. In terms of assembly, heterodimer of a large membrane-associated beta subunit and a small pyruvoyl-containing alpha subunit. Pyruvate is required as a cofactor. In terms of processing, is synthesized initially as an inactive proenzyme. Formation of the active enzyme involves a self-maturation process in which the active site pyruvoyl group is generated from an internal serine residue via an autocatalytic post-translational modification. Two non-identical subunits are generated from the proenzyme in this reaction, and the pyruvate is formed at the N-terminus of the alpha chain, which is derived from the carboxyl end of the proenzyme. The autoendoproteolytic cleavage occurs by a canonical serine protease mechanism, in which the side chain hydroxyl group of the serine supplies its oxygen atom to form the C-terminus of the beta chain, while the remainder of the serine residue undergoes an oxidative deamination to produce ammonia and the pyruvoyl prosthetic group on the alpha chain. During this reaction, the Ser that is part of the protease active site of the proenzyme becomes the pyruvoyl prosthetic group, which constitutes an essential element of the active site of the mature decarboxylase.

It is found in the cell membrane. The enzyme catalyses a 1,2-diacyl-sn-glycero-3-phospho-L-serine + H(+) = a 1,2-diacyl-sn-glycero-3-phosphoethanolamine + CO2. It participates in phospholipid metabolism; phosphatidylethanolamine biosynthesis; phosphatidylethanolamine from CDP-diacylglycerol: step 2/2. Functionally, catalyzes the formation of phosphatidylethanolamine (PtdEtn) from phosphatidylserine (PtdSer). The chain is Phosphatidylserine decarboxylase proenzyme from Vibrio vulnificus (strain CMCP6).